We begin with the raw amino-acid sequence, 155 residues long: Small ribosomal subunit protein uS7c (155 aa).

This sequence belongs to the universal ribosomal protein uS7 family. In terms of assembly, part of the 30S ribosomal subunit.

The protein resides in the plastid. It localises to the chloroplast. Functionally, one of the primary rRNA binding proteins, it binds directly to 16S rRNA where it nucleates assembly of the head domain of the 30S subunit. This is Small ribosomal subunit protein uS7c (rps7) from Dioscorea bulbifera (Air potato).